The following is a 254-amino-acid chain: NAD-dependent protein deacylase (254 aa).

Positions 1–250 (MERLEEARKR…LPPSPEDQAE (250 aa)) constitute a Deacetylase sirtuin-type domain. 22-41 (GAGISKPSGIPTFRDAEGLW) lines the NAD(+) pocket. Substrate-binding residues include Tyr66 and Arg69. Residue 104–107 (QNVD) coordinates NAD(+). His122 serves as the catalytic Proton acceptor. Positions 130, 133, 149, and 152 each coordinate Zn(2+). NAD(+)-binding positions include 189–191 (GTS), 215–217 (NPE), and Ala233.

It belongs to the sirtuin family. Class III subfamily. Requires Zn(2+) as cofactor.

The protein resides in the cytoplasm. It carries out the reaction N(6)-acetyl-L-lysyl-[protein] + NAD(+) + H2O = 2''-O-acetyl-ADP-D-ribose + nicotinamide + L-lysyl-[protein]. The catalysed reaction is N(6)-succinyl-L-lysyl-[protein] + NAD(+) + H2O = 2''-O-succinyl-ADP-D-ribose + nicotinamide + L-lysyl-[protein]. NAD-dependent lysine deacetylase and desuccinylase that specifically removes acetyl and succinyl groups on target proteins. Modulates the activities of several proteins which are inactive in their acylated form. The sequence is that of NAD-dependent protein deacylase from Thermus thermophilus (strain ATCC 27634 / DSM 579 / HB8).